Here is a 277-residue protein sequence, read N- to C-terminus: Urease accessory protein UreD (277 aa).

This sequence belongs to the UreD family. In terms of assembly, ureD, UreF and UreG form a complex that acts as a GTP-hydrolysis-dependent molecular chaperone, activating the urease apoprotein by helping to assemble the nickel containing metallocenter of UreC. The UreE protein probably delivers the nickel.

The protein resides in the cytoplasm. In terms of biological role, required for maturation of urease via the functional incorporation of the urease nickel metallocenter. This is Urease accessory protein UreD from Pseudomonas putida (strain ATCC 47054 / DSM 6125 / CFBP 8728 / NCIMB 11950 / KT2440).